A 280-amino-acid chain; its full sequence is Succinate dehydrogenase [ubiquinone] iron-sulfur subunit, mitochondrial (280 aa).

Residues Met-1 to Gly-28 constitute a mitochondrion transit peptide. One can recognise a 2Fe-2S ferredoxin-type domain in the interval Lys-40 to Met-133. N6-acetyllysine is present on residues Lys-51 and Lys-55. Positions 93, 98, 101, and 113 each coordinate [2Fe-2S] cluster. The tract at residues Phe-146–Trp-218 is interaction with SDHAF1. One can recognise a 4Fe-4S ferredoxin-type domain in the interval Asp-176–Tyr-206. Positions 186, 189, and 192 each coordinate [4Fe-4S] cluster. A [3Fe-4S] cluster-binding site is contributed by Cys-196. Trp-201 serves as a coordination point for a ubiquinone. The [3Fe-4S] cluster site is built by Cys-243 and Cys-249. Position 253 (Cys-253) interacts with [4Fe-4S] cluster.

This sequence belongs to the succinate dehydrogenase/fumarate reductase iron-sulfur protein family. Component of complex II composed of four subunits: the flavoprotein (FP) SDHA, iron-sulfur protein (IP) SDHB, and a cytochrome b560 composed of SDHC and SDHD. Interacts with SDHAF1; the interaction is required for iron-sulfur cluster incorporation into SDHB. The cofactor is [2Fe-2S] cluster. [3Fe-4S] cluster is required as a cofactor. It depends on [4Fe-4S] cluster as a cofactor.

Its subcellular location is the mitochondrion inner membrane. It catalyses the reaction a quinone + succinate = fumarate + a quinol. It carries out the reaction (R)-malate + a quinone = enol-oxaloacetate + a quinol. The catalysed reaction is (S)-malate + a quinone = enol-oxaloacetate + a quinol. It functions in the pathway carbohydrate metabolism; tricarboxylic acid cycle; fumarate from succinate (eukaryal route): step 1/1. Enol-oxaloacetate inhibits the succinate dehydrogenase activity. Its function is as follows. Iron-sulfur protein (IP) subunit of the succinate dehydrogenase complex (mitochondrial respiratory chain complex II), responsible for transferring electrons from succinate to ubiquinone (coenzyme Q). SDH also oxidizes malate to the non-canonical enol form of oxaloacetate, enol-oxaloacetate. Enol-oxaloacetate, which is a potent inhibitor of the succinate dehydrogenase activity, is further isomerized into keto-oxaloacetate. This Bos taurus (Bovine) protein is Succinate dehydrogenase [ubiquinone] iron-sulfur subunit, mitochondrial (SDHB).